Reading from the N-terminus, the 429-residue chain is Enolase (429 aa).

Q162 provides a ligand contact to (2R)-2-phosphoglycerate. The Proton donor role is filled by E204. Residues D241, E283, and D310 each coordinate Mg(2+). Residues K335, R364, S365, and K386 each coordinate (2R)-2-phosphoglycerate. K335 serves as the catalytic Proton acceptor.

It belongs to the enolase family. The cofactor is Mg(2+).

Its subcellular location is the cytoplasm. It localises to the secreted. The protein localises to the cell surface. It catalyses the reaction (2R)-2-phosphoglycerate = phosphoenolpyruvate + H2O. The protein operates within carbohydrate degradation; glycolysis; pyruvate from D-glyceraldehyde 3-phosphate: step 4/5. Functionally, catalyzes the reversible conversion of 2-phosphoglycerate (2-PG) into phosphoenolpyruvate (PEP). It is essential for the degradation of carbohydrates via glycolysis. This chain is Enolase, found in Mycobacterium tuberculosis (strain ATCC 25177 / H37Ra).